A 365-amino-acid polypeptide reads, in one-letter code: Peptide chain release factor 2 (365 aa).

N5-methylglutamine is present on Gln252.

Belongs to the prokaryotic/mitochondrial release factor family. Methylated by PrmC. Methylation increases the termination efficiency of RF2.

The protein localises to the cytoplasm. Functionally, peptide chain release factor 2 directs the termination of translation in response to the peptide chain termination codons UGA and UAA. This Pseudoalteromonas translucida (strain TAC 125) protein is Peptide chain release factor 2.